The primary structure comprises 544 residues: Intercellular adhesion molecule 3 (544 aa).

Positions 1–31 are cleaved as a signal peptide; that stretch reads MIASGPPPRVYWTSLIFLLLACCLLPTGAQG. Topologically, residues 32 to 486 are extracellular; that stretch reads QTYQVRVEPK…MMDVQGRNPV (455 aa). An Ig-like C2-type 1 domain is found at 48–105; that stretch reads GEPLVVNCTLDCPGPGLISLETALSKEPHSRGLGWAAFRLTNVTGDMEILCSGICNKS. N-linked (GlcNAc...) asparagine glycosylation is found at asparagine 54, asparagine 89, asparagine 103, asparagine 112, asparagine 138, asparagine 190, asparagine 209, asparagine 243, asparagine 267, asparagine 296, asparagine 321, and asparagine 326. Intrachain disulfides connect cysteine 55/cysteine 98 and cysteine 59/cysteine 102. The region spanning 134-200 is the Ig-like C2-type 2 domain; sequence GEELNLSCLV…FSCRSELDLR (67 aa). Cysteine 141 and cysteine 193 form a disulfide bridge. The Ig-like C2-type 3 domain maps to 237-302; sequence ETSWPVNCSL…IVCNVTLGVE (66 aa). Cysteine 244 and cysteine 295 are joined by a disulfide. An Ig-like C2-type 4 domain is found at 330–383; the sequence is GTPVTVTCAAGPQVQVMLDGVPAAVPGQPAQLQLKATEMDDRRTFFCNATLKVH. Cysteine 337 and cysteine 376 are joined by a disulfide. 3 N-linked (GlcNAc...) asparagine glycosylation sites follow: asparagine 377, asparagine 390, and asparagine 456. An Ig-like C2-type 5 domain is found at 417 to 470; sequence KTMHILQCQARGNPNPQLQCLREGSKFKVPVGIPFLVLLNYSGTYSCQAASSRG. The cysteines at positions 424 and 463 are disulfide-linked. The chain crosses the membrane as a helical span at residues 487-511; it reads TINIVLGVLAILGLVTLAAASVYVF. Over 512–544 the chain is Cytoplasmic; sequence WVQRQHDIYHLTPRSTRWRLTSTQPVTVAEELS.

Belongs to the immunoglobulin superfamily. ICAM family. In terms of assembly, interacts with moesin/MSN. As to expression, leukocytes.

Its subcellular location is the membrane. Functionally, ICAM proteins are ligands for the leukocyte adhesion protein LFA-1 (integrin alpha-L/beta-2). ICAM3 is also a ligand for integrin alpha-D/beta-2. In association with integrin alpha-L/beta-2, contributes to apoptotic neutrophil phagocytosis by macrophages. The chain is Intercellular adhesion molecule 3 (ICAM3) from Bos taurus (Bovine).